The primary structure comprises 357 residues: Uroporphyrinogen decarboxylase (357 aa).

Residues 30 to 34, D79, Y154, S209, and H336 contribute to the substrate site; that span reads RQAGR.

This sequence belongs to the uroporphyrinogen decarboxylase family. Homodimer.

The protein resides in the cytoplasm. It catalyses the reaction uroporphyrinogen III + 4 H(+) = coproporphyrinogen III + 4 CO2. Its pathway is porphyrin-containing compound metabolism; protoporphyrin-IX biosynthesis; coproporphyrinogen-III from 5-aminolevulinate: step 4/4. Functionally, catalyzes the decarboxylation of four acetate groups of uroporphyrinogen-III to yield coproporphyrinogen-III. The sequence is that of Uroporphyrinogen decarboxylase from Mycobacterium bovis (strain ATCC BAA-935 / AF2122/97).